Here is a 100-residue protein sequence, read N- to C-terminus: Small ribosomal subunit protein uS14 (100 aa).

This sequence belongs to the universal ribosomal protein uS14 family. As to quaternary structure, part of the 30S ribosomal subunit. Contacts proteins S3 and S10.

Its function is as follows. Binds 16S rRNA, required for the assembly of 30S particles and may also be responsible for determining the conformation of the 16S rRNA at the A site. This Thermosynechococcus vestitus (strain NIES-2133 / IAM M-273 / BP-1) protein is Small ribosomal subunit protein uS14.